We begin with the raw amino-acid sequence, 273 residues long: Dermonecrotic toxin LhSicTox-alphaIA2biv (273 aa).

Residue histidine 5 is part of the active site. Mg(2+)-binding residues include glutamate 25 and aspartate 27. The active-site Nucleophile is the histidine 41. Cystine bridges form between cysteine 45-cysteine 51 and cysteine 47-cysteine 190. Mg(2+) is bound at residue aspartate 85.

Belongs to the arthropod phospholipase D family. Class II subfamily. The cofactor is Mg(2+). Expressed by the venom gland.

It localises to the secreted. It carries out the reaction an N-(acyl)-sphingosylphosphocholine = an N-(acyl)-sphingosyl-1,3-cyclic phosphate + choline. The enzyme catalyses an N-(acyl)-sphingosylphosphoethanolamine = an N-(acyl)-sphingosyl-1,3-cyclic phosphate + ethanolamine. It catalyses the reaction a 1-acyl-sn-glycero-3-phosphocholine = a 1-acyl-sn-glycero-2,3-cyclic phosphate + choline. The catalysed reaction is a 1-acyl-sn-glycero-3-phosphoethanolamine = a 1-acyl-sn-glycero-2,3-cyclic phosphate + ethanolamine. Dermonecrotic toxins cleave the phosphodiester linkage between the phosphate and headgroup of certain phospholipids (sphingolipid and lysolipid substrates), forming an alcohol (often choline) and a cyclic phosphate. This toxin acts on sphingomyelin (SM). It may also act on ceramide phosphoethanolamine (CPE), lysophosphatidylcholine (LPC) and lysophosphatidylethanolamine (LPE), but not on lysophosphatidylserine (LPS), and lysophosphatidylglycerol (LPG). It acts by transphosphatidylation, releasing exclusively cyclic phosphate products as second products. Induces dermonecrosis, hemolysis, increased vascular permeability, edema, inflammatory response, and platelet aggregation. The chain is Dermonecrotic toxin LhSicTox-alphaIA2biv from Loxosceles hirsuta (Recluse spider).